Here is a 243-residue protein sequence, read N- to C-terminus: Uridylate kinase (243 aa).

Position 15 to 18 (15 to 18 (KLSG)) interacts with ATP. Residues 23–28 (GSEGFG) form an involved in allosteric activation by GTP region. Gly57 is a binding site for UMP. Gly58 and Arg62 together coordinate ATP. Residues Asp77 and 138–145 (TGNPFFTT) contribute to the UMP site. Positions 165, 171, and 174 each coordinate ATP.

It belongs to the UMP kinase family. Homohexamer.

Its subcellular location is the cytoplasm. It carries out the reaction UMP + ATP = UDP + ADP. It participates in pyrimidine metabolism; CTP biosynthesis via de novo pathway; UDP from UMP (UMPK route): step 1/1. With respect to regulation, allosterically activated by GTP. Inhibited by UTP. In terms of biological role, catalyzes the reversible phosphorylation of UMP to UDP. This is Uridylate kinase from Vibrio cholerae serotype O1 (strain ATCC 39541 / Classical Ogawa 395 / O395).